Reading from the N-terminus, the 351-residue chain is sn-glycerol-3-phosphate import ATP-binding protein UgpC (351 aa).

In terms of domain architecture, ABC transporter spans 4-234; the sequence is ITLKDLVKSY…PATLFVAGFI (231 aa). 36 to 43 lines the ATP pocket; the sequence is GPSGCGKS.

Belongs to the ABC transporter superfamily. sn-glycerol-3-phosphate importer (TC 3.A.1.1.3) family. The complex is composed of two ATP-binding proteins (UgpC), two transmembrane proteins (UgpA and UgpE) and a solute-binding protein (UgpB).

The protein resides in the cell inner membrane. It carries out the reaction sn-glycerol 3-phosphate(out) + ATP + H2O = sn-glycerol 3-phosphate(in) + ADP + phosphate + H(+). Its function is as follows. Part of the ABC transporter complex UgpBAEC involved in sn-glycerol-3-phosphate (G3P) import. Responsible for energy coupling to the transport system. The chain is sn-glycerol-3-phosphate import ATP-binding protein UgpC from Ruegeria sp. (strain TM1040) (Silicibacter sp.).